We begin with the raw amino-acid sequence, 79 residues long: uncharacterized protein (79 aa).

The first 33 residues, M1 to A33, serve as a signal peptide directing secretion.

This is an uncharacterized protein from Salmonella paratyphi A (strain ATCC 9150 / SARB42).